The following is a 254-amino-acid chain: Bowman-Birk type bran trypsin inhibitor (254 aa).

The first 22 residues, 1 to 22 (MSNTTMATSTILLFLLAGLAAA), serve as a signal peptide directing secretion. Residues 23 to 118 (HGDGDTTIRL…KCTAALDGLS (96 aa)) constitute a propeptide that is removed on maturation. 3 consecutive repeats follow at residues 46–120 (KPWD…LSME), 121–187 (RPWK…LCTP), and 188–251 (RPWG…CKPR). 10 disulfides stabilise this stretch: C51–C248, C125–C185, C126–C143, C152–C159, C156–C172, C193–C248, C194–C209, C199–C207, C216–C223, and C220–C236. Residues 252–254 (AEN) constitute a propeptide that is removed on maturation.

It belongs to the Bowman-Birk serine protease inhibitor family. As to expression, expressed in roots, leaves and flowers.

The protein is Bowman-Birk type bran trypsin inhibitor (RBBI3.3) of Oryza sativa subsp. indica (Rice).